Consider the following 267-residue polypeptide: Protein PERCC1 (267 aa).

3 disordered regions span residues 19-88 (HHPF…QLLR), 142-163 (SLED…RPGL), and 247-267 (ACPE…PAEA). Residues 28–50 (EPPETSEEEEEEEEEEEEEEGEG) are compositionally biased toward acidic residues. A compositionally biased stretch (low complexity) spans 74–83 (PEGPGSPETP).

Its function is as follows. Plays a critical role in intestinal function. Acts by promoting the development of enteroendocrine cells (EECs) of the gastrointestinal tract and pancreas. It is thereby required for normal enteroendocrine peptide hormone secretion. The sequence is that of Protein PERCC1 from Homo sapiens (Human).